Here is a 983-residue protein sequence, read N- to C-terminus: Ephrin type-A receptor 3 (983 aa).

An N-terminal signal peptide occupies residues 1-20; it reads MDCQLSILLLLSCSVLDSFG. At 21–541 the chain is on the extracellular side; that stretch reads ELIPQPSNEV…SFSISGESSQ (521 aa). The Eph LBD domain occupies 29–207; sequence EVNLLDSKTI…YFKKCPFTVK (179 aa). N-linked (GlcNAc...) asparagine glycans are attached at residues Asn232, Asn337, Asn391, Asn404, and Asn493. Fibronectin type-III domains are found at residues 325 to 435 and 436 to 531; these read PPSS…TNQA and APSP…TSPD. A helical membrane pass occupies residues 542-565; that stretch reads VVMIAISAAVAIILLTVVIYVLIG. The Cytoplasmic portion of the chain corresponds to 566–983; sequence RFCGYKSKHG…TQSKNGPVPV (418 aa). Phosphotyrosine; by autocatalysis occurs at positions 596 and 602. The Protein kinase domain occupies 621–882; that stretch reads ISIDKVVGAG…QIVSILDKLI (262 aa). Residues 628 to 633, Lys653, and 700 to 706 each bind ATP; these read GAGEFG and EYMENGS. A Phosphotyrosine; by autocatalysis modification is found at Tyr701. The active-site Proton acceptor is Asp746. ATP is bound at residue 750 to 751; it reads RN. Tyr779 is subject to Phosphotyrosine; by autocatalysis. The SAM domain occupies 911–975; sequence TTFRTTGDWL…ISSIKALETQ (65 aa). A Phosphotyrosine modification is found at Tyr937. The short motif at 981–983 is the PDZ-binding element; that stretch reads VPV.

Belongs to the protein kinase superfamily. Tyr protein kinase family. Ephrin receptor subfamily. Heterotetramer upon binding of the ligand. The heterotetramer is composed of an ephrin dimer and a receptor dimer. Oligomerization is probably required to induce biological responses. Forms a ternary EFNA5-EPHA3-ADAM10 complex mediating EFNA5 extracellular domain shedding by ADAM10 which regulates the EFNA5-EPHA3 complex internalization and function. Interacts with NCK1 (via SH2 domain); mediates EFNA5-EPHA3 signaling. Interacts (phosphorylated) with PTPN1; dephosphorylates EPHA3 and may regulate its trafficking and function. Interacts (phosphorylated) with CRK; mediates EFNA5-EPHA3 signaling through RHOA GTPase activation. In terms of processing, autophosphorylates upon activation by EFNA5. Phosphorylation on Tyr-602 mediates interaction with NCK1. Dephosphorylated by PTPN1. In terms of tissue distribution, widely expressed. Highest level in placenta.

It is found in the cell membrane. It localises to the secreted. The enzyme catalyses L-tyrosyl-[protein] + ATP = O-phospho-L-tyrosyl-[protein] + ADP + H(+). In terms of biological role, receptor tyrosine kinase which binds promiscuously membrane-bound ephrin family ligands residing on adjacent cells, leading to contact-dependent bidirectional signaling into neighboring cells. The signaling pathway downstream of the receptor is referred to as forward signaling while the signaling pathway downstream of the ephrin ligand is referred to as reverse signaling. Highly promiscuous for ephrin-A ligands it binds preferentially EFNA5. Upon activation by EFNA5 regulates cell-cell adhesion, cytoskeletal organization and cell migration. Plays a role in cardiac cells migration and differentiation and regulates the formation of the atrioventricular canal and septum during development probably through activation by EFNA1. Involved in the retinotectal mapping of neurons. May also control the segregation but not the guidance of motor and sensory axons during neuromuscular circuit development. The protein is Ephrin type-A receptor 3 (EPHA3) of Homo sapiens (Human).